The primary structure comprises 252 residues: Hydrolase phiM (252 aa).

Ser126 functions as the Charge relay system in the catalytic mechanism.

It belongs to the LovG family.

It participates in secondary metabolite biosynthesis. Functionally, hydrolase; part of the gene cluster that mediates the biosynthesis of the antihypercholesterolemic agents phomoidrides which are dimeric anhydrides. Within the pathway, phiM releases the C12-fatty acyl chain from phiA. The pathway begins with the highly reducing polyketide synthase tstA that catalyzes the formation of a C12-fatty acyl-ACP, starting from one acetate and 5 malonate units. The hydrolase tstM is involved in the release of the C12-fatty acyl chain from phiA. The alkylcitrate synthase (ACS) tstJ and the alkylcitrate dehydratase (ACDH) tstI then give rise to decarboxylated monomeric anhydrides by coupling the C12-fatty acyl chain with oxalacetic acid. The cyclase tstC is responsible for the dimerization of the monomeric anhydrides which leads to the production of prephomoidride that contains the characteristic bicyclo[4.3.1]deca-1,6-diene system of phomoidrides. Iterative oxidation catalyzed by the alpha-ketoglutarate-dependent dioxygenase tstK produced then phomoidride A. Finally, the methyltransferase tstE converts phomoidride A to phomoidride B via an acetalization reaction. The phosphatidylethanolamine-binding protein tstB and tstN are not essential for dimerization and their functions have still to be determined. The chain is Hydrolase phiM from Talaromyces stipitatus (strain ATCC 10500 / CBS 375.48 / QM 6759 / NRRL 1006) (Penicillium stipitatum).